The sequence spans 381 residues: Cytochrome b (381 aa).

A run of 4 helical transmembrane segments spans residues 34–54 (FGSLLGICLITPILTGVMLAM), 78–99 (WMIRNLHANGASFFFICIYLHI), 114–134 (WNTGIILLLTLMATAFVGYVL), and 179–199 (FFALHFLLPFLIAGISIVHLT). The heme b site is built by His-84 and His-98. His-183 and His-197 together coordinate heme b. His-202 serves as a coordination point for a ubiquinone. 4 helical membrane-spanning segments follow: residues 227-247 (MKDLLGFTLLSLPFLALAFFT), 289-309 (LGGVLALAASVLILFTIPLLH), 321-341 (MSQILFWLLVANLFILTWVGS), and 348-368 (FIIIGQLASLSYFTILLFLFP).

Belongs to the cytochrome b family. As to quaternary structure, the cytochrome bc1 complex contains 11 subunits: 3 respiratory subunits (MT-CYB, CYC1 and UQCRFS1), 2 core proteins (UQCRC1 and UQCRC2) and 6 low-molecular weight proteins (UQCRH/QCR6, UQCRB/QCR7, UQCRQ/QCR8, UQCR10/QCR9, UQCR11/QCR10 and a cleavage product of UQCRFS1). This cytochrome bc1 complex then forms a dimer. It depends on heme b as a cofactor.

Its subcellular location is the mitochondrion inner membrane. In terms of biological role, component of the ubiquinol-cytochrome c reductase complex (complex III or cytochrome b-c1 complex) that is part of the mitochondrial respiratory chain. The b-c1 complex mediates electron transfer from ubiquinol to cytochrome c. Contributes to the generation of a proton gradient across the mitochondrial membrane that is then used for ATP synthesis. In Nothoprocta perdicaria (Chilean tinamou), this protein is Cytochrome b (MT-CYB).